A 90-amino-acid chain; its full sequence is Probable Fe(2+)-trafficking protein (90 aa).

Belongs to the Fe(2+)-trafficking protein family.

In terms of biological role, could be a mediator in iron transactions between iron acquisition and iron-requiring processes, such as synthesis and/or repair of Fe-S clusters in biosynthetic enzymes. This is Probable Fe(2+)-trafficking protein from Haemophilus influenzae (strain PittEE).